The sequence spans 46 residues: Photosystem II reaction center protein K (46 aa).

A propeptide spanning residues 1–9 (MIDALVLVA) is cleaved from the precursor. Residues 10–19 (KLPEAYAIFD) lie on the Lumenal side of the membrane. A helical membrane pass occupies residues 20–39 (PLVDVLPVIPVLFLALAFVW). The Cytoplasmic segment spans residues 40–46 (QAAVGFR).

It belongs to the PsbK family. In terms of assembly, PSII is composed of 1 copy each of membrane proteins PsbA, PsbB, PsbC, PsbD, PsbE, PsbF, PsbH, PsbI, PsbJ, PsbK, PsbL, PsbM, PsbT, PsbX, PsbY, PsbZ, Psb30/Ycf12, peripheral proteins PsbO, CyanoQ(PsbQ), PsbU, PsbV and a large number of cofactors. It forms dimeric complexes. Part of a photosystem II (PSII) assembly intermediate complex PSII-I; crystallized from a strain deleted of psbJ, it forms monomeric PSII before addition of the oxygen evolving complex. PSII-I includes 3 assembly factors not found in mature PSII (Psb27, Psb28 and Psb34). Requires PSII binds multiple chlorophylls, carotenoids and specific lipids. as cofactor.

It is found in the cellular thylakoid membrane. In terms of biological role, one of the components of the core complex of photosystem II (PSII). PSII is a light-driven water:plastoquinone oxidoreductase that uses light energy to abstract electrons from H(2)O, generating O(2) and a proton gradient subsequently used for ATP formation. It consists of a core antenna complex that captures photons, and an electron transfer chain that converts photonic excitation into a charge separation. Required for association of PsbZ and Psb30/Ycf12 with PSII. The sequence is that of Photosystem II reaction center protein K from Thermosynechococcus vestitus (strain NIES-2133 / IAM M-273 / BP-1).